A 153-amino-acid polypeptide reads, in one-letter code: UPF0251 protein Daud_0090 (153 aa).

Residues 129 to 138 show a composition bias toward basic and acidic residues; that stretch reads ELMTRPERCS. The interval 129–153 is disordered; that stretch reads ELMTRPERCSRPKRGAGKYRVPKKR. Basic residues predominate over residues 139–153; it reads RPKRGAGKYRVPKKR.

The protein belongs to the UPF0251 family.

The protein is UPF0251 protein Daud_0090 of Desulforudis audaxviator (strain MP104C).